The following is a 1172-amino-acid chain: Thrombospondin-2 (1172 aa).

The N-terminal stretch at 1–18 (MVWRLVLLALWVWPSTQA) is a signal peptide. Residues 19–215 (GHQDKDTTFD…LQNVHLVFEN (197 aa)) form the Laminin G-like domain. The tract at residues 19 to 232 (GHQDKDTTFD…KKGCQQGQGA (214 aa)) is heparin-binding. N-linked (GlcNAc...) asparagine glycans are attached at residues Asn151, Asn316, and Asn330. Residues 318–375 (SACWQDGRFFAENETWVVDSCTTCTCKKFKTICHQITCPPATCASPSFVEGECCPSCL) enclose the VWFC domain. TSP type-1 domains lie at 381-431 (EEGW…SKCD), 437-492 (DGGW…APCP), and 494-549 (DGRW…RSCP). Intrachain disulfides connect Cys393/Cys425, Cys397/Cys430, Cys408/Cys415, Cys449/Cys486, Cys453/Cys491, Cys464/Cys476, Cys506/Cys543, Cys510/Cys548, Cys521/Cys533, Cys553/Cys564, Cys558/Cys574, Cys577/Cys588, Cys594/Cys610, Cys601/Cys619, Cys622/Cys646, Cys652/Cys665, Cys659/Cys678, Cys680/Cys691, Cys707/Cys715, Cys720/Cys740, Cys756/Cys776, Cys779/Cys799, Cys815/Cys835, Cys838/Cys858, Cys876/Cys896, Cys912/Cys932, and Cys948/Cys1169. N-linked (GlcNAc...) asparagine glycosylation is present at Asn457. Positions 549–589 (PVDGCLSNPCFPGAQCSSFPDGSWSCGSCPVGFLGNGTHCE) constitute an EGF-like 1 domain. An N-linked (GlcNAc...) asparagine glycan is attached at Asn584. The EGF-like 2 domain maps to 648-692 (PENPCKDKTHNCHKHAECIYLGHFSDPMYKCECQTGYAGDGLICG). TSP type-3 repeat units follow at residues 693–728 (EDSD…NSGQ), 729–764 (EDFD…NPRQ), 765–787 (ADYD…NPAQ), 788–823 (IDTD…NTDQ), 824–846 (RDTD…NPDQ), 847–884 (TDVD…NANQ), 885–920 (ADHD…NPDQ), and 921–956 (EDLD…AISE). Residue Asn710 is glycosylated (N-linked (GlcNAc...) asparagine). The disordered stretch occupies residues 843–931 (NPDQTDVDND…DLDGDGRGDI (89 aa)). A compositionally biased stretch (acidic residues) spans 847–866 (TDVDNDLVGDQCDNNEDIDD). Polar residues predominate over residues 870-884 (QNNQDNCPYISNANQ). Acidic residues predominate over residues 896-905 (CDPDDDNDGV). The short motif at 928-930 (RGD) is the Cell attachment site element. A TSP C-terminal domain is found at 960-1172 (RNFQMVPLDP…SDLKYECRDI (213 aa)). N-linked (GlcNAc...) asparagine glycosylation is present at Asn1069.

It belongs to the thrombospondin family. As to quaternary structure, homotrimer; disulfide-linked. Interacts (via the TSP type I repeats) with CD36; the interaction conveys an antiangiogenic effect. Interacts (via the TSP type I repeats) with HRG; the interaction blocks the antiangiogenic effect of THBS2 with CD36. Can bind to fibrinogen, fibronectin, laminin and type V collagen. High expression in invertebral disk tissue.

Its function is as follows. Adhesive glycoprotein that mediates cell-to-cell and cell-to-matrix interactions. Ligand for CD36 mediating antiangiogenic properties. In Homo sapiens (Human), this protein is Thrombospondin-2 (THBS2).